A 549-amino-acid chain; its full sequence is DNA ligase 1 (549 aa).

Position 212 (glutamate 212) interacts with ATP. The N6-AMP-lysine intermediate role is filled by lysine 214. ATP contacts are provided by arginine 219, arginine 234, glutamate 264, phenylalanine 310, arginine 387, and lysine 393.

This sequence belongs to the ATP-dependent DNA ligase family. Requires Mg(2+) as cofactor.

It carries out the reaction ATP + (deoxyribonucleotide)n-3'-hydroxyl + 5'-phospho-(deoxyribonucleotide)m = (deoxyribonucleotide)n+m + AMP + diphosphate.. DNA ligase that seals nicks in double-stranded DNA during DNA replication, DNA recombination and DNA repair. In Methanosarcina barkeri (strain Fusaro / DSM 804), this protein is DNA ligase 1.